Here is a 352-residue protein sequence, read N- to C-terminus: DNA polymerase IV (352 aa).

A UmuC domain is found at 6–186 (IIHIDMDAFY…LPLGKIPGVG (181 aa)). Residues aspartate 10 and aspartate 104 each coordinate Mg(2+). Residue glutamate 105 is part of the active site.

The protein belongs to the DNA polymerase type-Y family. Monomer. Requires Mg(2+) as cofactor.

It localises to the cytoplasm. The enzyme catalyses DNA(n) + a 2'-deoxyribonucleoside 5'-triphosphate = DNA(n+1) + diphosphate. In terms of biological role, poorly processive, error-prone DNA polymerase involved in untargeted mutagenesis. Copies undamaged DNA at stalled replication forks, which arise in vivo from mismatched or misaligned primer ends. These misaligned primers can be extended by PolIV. Exhibits no 3'-5' exonuclease (proofreading) activity. May be involved in translesional synthesis, in conjunction with the beta clamp from PolIII. This Neisseria meningitidis serogroup C / serotype 2a (strain ATCC 700532 / DSM 15464 / FAM18) protein is DNA polymerase IV.